The following is a 171-amino-acid chain: Putative adenylate kinase (171 aa).

ATP contacts are provided by G9, G11, K12, T13, and T14. Positions 28–51 (SLGELIRQKGFVLGRDPIRGYLEA) are NMP. The LID stretch occupies residues 99–109 (GRGYPEGKVLE). R100 is a binding site for ATP.

It belongs to the adenylate kinase family. AK6 subfamily. In terms of assembly, interacts with uS11. Not a structural component of 40S pre-ribosomes, but transiently interacts with them by binding to uS11.

It carries out the reaction AMP + ATP = 2 ADP. The catalysed reaction is ATP + H2O = ADP + phosphate + H(+). Functionally, broad-specificity nucleoside monophosphate (NMP) kinase that catalyzes the reversible transfer of the terminal phosphate group between nucleoside triphosphates and monophosphates. Also has ATPase activity. Involved in the late maturation steps of the 30S ribosomal particles, specifically 16S rRNA maturation. While NMP activity is not required for ribosome maturation, ATPase activity is. Associates transiently with small ribosomal subunit protein uS11. ATP hydrolysis breaks the interaction with uS11. May temporarily remove uS11 from the ribosome to enable a conformational change of the ribosomal RNA that is needed for the final maturation step of the small ribosomal subunit. The polypeptide is Putative adenylate kinase (Methanothermobacter thermautotrophicus (strain ATCC 29096 / DSM 1053 / JCM 10044 / NBRC 100330 / Delta H) (Methanobacterium thermoautotrophicum)).